A 553-amino-acid polypeptide reads, in one-letter code: Syntaxin-binding protein 4 (553 aa).

Phosphoserine is present on residues Ser10, Ser12, Ser99, and Ser212. The 87-residue stretch at 19–105 folds into the PDZ domain; that stretch reads AFQMITIAKE…RLESAWEIAF (87 aa). Residues 291-417 are a coiled coil; that stretch reads SSEADEMERL…VLDCQLRKSE (127 aa). Ser463 bears the Phosphoserine mark. The 34-residue stretch at 496 to 529 folds into the WW domain; sequence DCLPYGWEEAYTADGIKYFINHVTQTTSWIHPVM.

In terms of assembly, interacts with STX4A. In terms of processing, phosphorylated on Ser-99 by PKB/AKT2 after insulin treatment. Phosphorylation on Ser-99 abolishes the interaction with STX4A.

It is found in the cytoplasm. Functionally, plays a role in the translocation of transport vesicles from the cytoplasm to the plasma membrane. Inhibits the translocation of SLC2A4 from intracellular vesicles to the plasma membrane by STX4A binding and preventing the interaction between STX4A and VAMP2. Stimulation with insulin disrupts the interaction with STX4A, leading to increased levels of SLC2A4 at the plasma membrane. May also play a role in the regulation of insulin release by pancreatic beta cells after stimulation by glucose. The protein is Syntaxin-binding protein 4 (STXBP4) of Homo sapiens (Human).